The primary structure comprises 74 residues: MSKECKICGKKPMVGNNVSHAHNVNKRRFNPNLQRVKALFDGQVRRIDVCTSCIKAGKVVKAPTMGQGKVTSAS.

This sequence belongs to the bacterial ribosomal protein bL28 family.

This chain is Large ribosomal subunit protein bL28, found in Desulforapulum autotrophicum (strain ATCC 43914 / DSM 3382 / VKM B-1955 / HRM2) (Desulfobacterium autotrophicum).